The primary structure comprises 274 residues: Tryptophan synthase alpha chain (274 aa).

Active-site proton acceptor residues include Glu49 and Asp60.

The protein belongs to the TrpA family. Tetramer of two alpha and two beta chains.

The enzyme catalyses (1S,2R)-1-C-(indol-3-yl)glycerol 3-phosphate + L-serine = D-glyceraldehyde 3-phosphate + L-tryptophan + H2O. It participates in amino-acid biosynthesis; L-tryptophan biosynthesis; L-tryptophan from chorismate: step 5/5. Its function is as follows. The alpha subunit is responsible for the aldol cleavage of indoleglycerol phosphate to indole and glyceraldehyde 3-phosphate. In Gluconacetobacter diazotrophicus (strain ATCC 49037 / DSM 5601 / CCUG 37298 / CIP 103539 / LMG 7603 / PAl5), this protein is Tryptophan synthase alpha chain.